The sequence spans 82 residues: U-actitoxin-Avd3k (82 aa).

The signal sequence occupies residues 1–16; the sequence is MVFLLCFFLVADVSYG. Residues 21-71 form the BPTI/Kunitz inhibitor domain; that stretch reads CLLPMDVGRCRARHPRYYYNSSSKRCEKFIYGGCRGNANNFITKKECEKVC. Disulfide bonds link C21/C71, C30/C54, and C46/C67. Positions 76–82 are excised as a propeptide; sequence RDSPKEN.

The protein belongs to the venom Kunitz-type family. Sea anemone type 2 potassium channel toxin subfamily.

It is found in the secreted. The protein localises to the nematocyst. Functionally, dual-function toxin that inhibits both the serine protease trypsin and voltage-gated potassium channels Kv1.2/KCNA2. The chain is U-actitoxin-Avd3k from Anemonia viridis (Snakelocks anemone).